A 521-amino-acid chain; its full sequence is Aldehyde dehydrogenase, mitochondrial (521 aa).

A mitochondrion-targeting transit peptide spans 1-21 (MLRPAALAAARLVLRQGRRLL). The short motif at 13–28 (VLRQGRRLLSAAPTQA) is the SIFI-degron element. K56, K77, and K163 each carry N6-acetyllysine. 266–271 (GSTEVG) contacts NAD(+). E289 acts as the Proton acceptor in catalysis. The active-site Nucleophile is the C323. Residues K372, K379, K387, K430, K432, K445, and K455 each carry the N6-acetyllysine modification.

Belongs to the aldehyde dehydrogenase family. As to quaternary structure, homotetramer. Post-translationally, in response to mitochondrial stress, the precursor protein is ubiquitinated by the SIFI complex in the cytoplasm before mitochondrial import, leading to its degradation. Within the SIFI complex, UBR4 initiates ubiquitin chain that are further elongated or branched by KCMF1.

Its subcellular location is the mitochondrion matrix. The catalysed reaction is an aldehyde + NAD(+) + H2O = a carboxylate + NADH + 2 H(+). It participates in alcohol metabolism; ethanol degradation; acetate from ethanol: step 2/2. Required for clearance of cellular formaldehyde, a cytotoxic and carcinogenic metabolite that induces DNA damage. In Sus scrofa (Pig), this protein is Aldehyde dehydrogenase, mitochondrial (ALDH2).